The following is a 148-amino-acid chain: NADPH-dependent 7-cyano-7-deazaguanine reductase (148 aa).

Residue Cys-50 is the Thioimide intermediate of the active site. Asp-57 serves as the catalytic Proton donor. Residues 72–74 (VES) and 91–92 (HE) each bind substrate.

The protein belongs to the GTP cyclohydrolase I family. QueF type 1 subfamily.

It localises to the cytoplasm. It catalyses the reaction 7-aminomethyl-7-carbaguanine + 2 NADP(+) = 7-cyano-7-deazaguanine + 2 NADPH + 3 H(+). It functions in the pathway tRNA modification; tRNA-queuosine biosynthesis. Functionally, catalyzes the NADPH-dependent reduction of 7-cyano-7-deazaguanine (preQ0) to 7-aminomethyl-7-deazaguanine (preQ1). This chain is NADPH-dependent 7-cyano-7-deazaguanine reductase, found in Helicobacter pylori (strain J99 / ATCC 700824) (Campylobacter pylori J99).